A 59-amino-acid polypeptide reads, in one-letter code: Large ribosomal subunit protein uL30 (59 aa).

It belongs to the universal ribosomal protein uL30 family. Part of the 50S ribosomal subunit.

This is Large ribosomal subunit protein uL30 from Leptospira biflexa serovar Patoc (strain Patoc 1 / ATCC 23582 / Paris).